Reading from the N-terminus, the 156-residue chain is Large ribosomal subunit protein uL13 (156 aa).

The protein belongs to the universal ribosomal protein uL13 family. As to quaternary structure, part of the 50S ribosomal subunit.

This protein is one of the early assembly proteins of the 50S ribosomal subunit, although it is not seen to bind rRNA by itself. It is important during the early stages of 50S assembly. In Archaeoglobus fulgidus (strain ATCC 49558 / DSM 4304 / JCM 9628 / NBRC 100126 / VC-16), this protein is Large ribosomal subunit protein uL13.